Consider the following 154-residue polypeptide: 6,7-dimethyl-8-ribityllumazine synthase (154 aa).

Residues phenylalanine 22, 56–58, and 80–82 each bind 5-amino-6-(D-ribitylamino)uracil; these read SFE and AVI. (2S)-2-hydroxy-3-oxobutyl phosphate is bound at residue 85 to 86; sequence ST. Histidine 88 (proton donor) is an active-site residue. Tyrosine 113 contributes to the 5-amino-6-(D-ribitylamino)uracil binding site. Arginine 127 contributes to the (2S)-2-hydroxy-3-oxobutyl phosphate binding site.

The protein belongs to the DMRL synthase family. As to quaternary structure, forms an icosahedral capsid composed of 60 subunits, arranged as a dodecamer of pentamers.

It catalyses the reaction (2S)-2-hydroxy-3-oxobutyl phosphate + 5-amino-6-(D-ribitylamino)uracil = 6,7-dimethyl-8-(1-D-ribityl)lumazine + phosphate + 2 H2O + H(+). The protein operates within cofactor biosynthesis; riboflavin biosynthesis; riboflavin from 2-hydroxy-3-oxobutyl phosphate and 5-amino-6-(D-ribitylamino)uracil: step 1/2. Catalyzes the formation of 6,7-dimethyl-8-ribityllumazine by condensation of 5-amino-6-(D-ribitylamino)uracil with 3,4-dihydroxy-2-butanone 4-phosphate. This is the penultimate step in the biosynthesis of riboflavin. This Sulfurihydrogenibium sp. (strain YO3AOP1) protein is 6,7-dimethyl-8-ribityllumazine synthase.